The following is a 669-amino-acid chain: MAVYRAALGASLAAARLLPLGRCSPSPAPRSTLSGAAMEPAPRWLAGLRFDNRALRALPVEAPPPGPEGAPSAPRPVPGACFTRVQPTPLRQPRLVALSEPALALLGLGAPPAREAEAEAALFFSGNALLPGAEPAAHCYCGHQFGQFAGQLGDGAAMYLGEVCTATGERWELQLKGAGPTPFSRQADGRKVLRSSIREFLCSEAMFHLGVPTTRAGACVTSESTVVRDVFYDGNPKYEQCTVVLRVASTFIRFGSFEIFKSADEHTGRAGPSVGRNDIRVQLLDYVISSFYPEIQAAHASDSVQRNAAFFREVTRRTARMVAEWQCVGFCHGVLNTDNMSILGLTIDYGPFGFLDRYDPDHVCNASDNTGRYAYSKQPEVCRWNLRKLAEALQPELPLELGEAILAEEFDAEFQRHYLQKMRRKLGLVQVELEEDGALVSKLLETMHLTGADFTNTFYLLSSFPVELESPGLAEFLARLMEQCASLEELRLAFRPQMDPRQLSMMLMLAQSNPQLFALMGTRAGIARELERVEQQSRLEQLSAAELQSRNQGHWADWLQAYRARLDKDLEGAGDAAAWQAEHVRVMHANNPKYVLRNYIAQNAIEAAERGDFSEVRRVLKLLETPYHCEAGAATDAEATEADGADGRQRSYSSKPPLWAAELCVTUSS.

The N-terminal 115 residues, 1 to 115, are a transit peptide targeting the mitochondrion; the sequence is MAVYRAALGA…LGLGAPPARE (115 aa). Gly-153, Gly-155, Lys-176, Asp-188, Gly-189, Arg-246, and Arg-253 together coordinate ATP. The active-site Proton acceptor is Asp-338. Positions 339 and 348 each coordinate Mg(2+). Asp-348 is a binding site for ATP. A disordered region spans residues 634–654; that stretch reads ATDAEATEADGADGRQRSYSS. Thr-635 is modified (phosphothreonine). Ser-653 carries the phosphoserine modification. Position 667 (Sec-667) is a non-standard amino acid, selenocysteine.

Belongs to the SELO family. Mg(2+) serves as cofactor.

The protein localises to the mitochondrion. It carries out the reaction L-tyrosyl-[protein] + ATP = O-(5'-adenylyl)-L-tyrosyl-[protein] + diphosphate. The enzyme catalyses L-threonyl-[protein] + ATP = 3-O-(5'-adenylyl)-L-threonyl-[protein] + diphosphate. The catalysed reaction is L-seryl-[protein] + ATP = 3-O-(5'-adenylyl)-L-seryl-[protein] + diphosphate. Functionally, catalyzes the transfer of adenosine 5'-monophosphate (AMP) to Ser, Thr and Tyr residues of target proteins (AMPylation). May be a redox-active mitochondrial selenoprotein which interacts with a redox target protein. The chain is Protein adenylyltransferase SelO, mitochondrial from Homo sapiens (Human).